Reading from the N-terminus, the 310-residue chain is GMP synthase [glutamine-hydrolyzing] subunit B (310 aa).

The 184-residue stretch at 2 to 185 folds into the GMPS ATP-PPase domain; sequence FDPKKFIDEA…LGLPDSIVYR (184 aa). 29 to 35 is an ATP binding site; sequence SGGVDSS.

Heterodimer composed of a glutamine amidotransferase subunit (A) and a GMP-binding subunit (B).

It catalyses the reaction XMP + L-glutamine + ATP + H2O = GMP + L-glutamate + AMP + diphosphate + 2 H(+). It functions in the pathway purine metabolism; GMP biosynthesis; GMP from XMP (L-Gln route): step 1/1. Catalyzes the synthesis of GMP from XMP. This chain is GMP synthase [glutamine-hydrolyzing] subunit B (guaAB), found in Methanocaldococcus jannaschii (strain ATCC 43067 / DSM 2661 / JAL-1 / JCM 10045 / NBRC 100440) (Methanococcus jannaschii).